The sequence spans 322 residues: Pre-mRNA-splicing factor NTR2 (322 aa).

A disordered region spans residues 1-30 (MAIKKRNKIRLPSGSPEEVGIDGSAHKPMQ). At Ser40 the chain carries Phosphoserine. A disordered region spans residues 113–137 (LLSDSSEAGSSSEGEHISSIPTRGE). A compositionally biased stretch (low complexity) spans 115–132 (SDSSEAGSSSEGEHISSI). Phosphoserine occurs at positions 153 and 197.

In terms of assembly, component of the NTR complex (NTC-related complex), composed of NTR1, NTR2 and PRP43. Interacts with CLF1, NTR1 and PRP43.

It localises to the cytoplasm. It is found in the nucleus. Functionally, involved in pre-mRNA splicing and spliceosome disassembly. Promotes release of excised lariat intron from the spliceosome by acting as a receptor for PRP43. This targeting of PRP43 leads to disassembly of the spliceosome with the separation of the U2, U5, U6 snRNPs and the NTC complex. This chain is Pre-mRNA-splicing factor NTR2 (NTR2), found in Saccharomyces cerevisiae (strain ATCC 204508 / S288c) (Baker's yeast).